The chain runs to 429 residues: C4-dicarboxylate transport protein (429 aa).

8 helical membrane passes run 3–23 (VSIF…GVLL), 44–64 (LIKM…IAGM), 76–96 (IALL…LVVV), 144–164 (AFAS…GFAL), 184–204 (VIFG…FGAM), 222–242 (LILC…GTIA), 331–351 (TLLV…GSGF), and 352–372 (IVLA…LALI).

It belongs to the dicarboxylate/amino acid:cation symporter (DAACS) (TC 2.A.23) family.

It localises to the cell inner membrane. Functionally, responsible for the transport of dicarboxylates such as succinate, fumarate, and malate from the periplasm across the membrane. The protein is C4-dicarboxylate transport protein of Yersinia pestis bv. Antiqua (strain Antiqua).